A 331-amino-acid chain; its full sequence is D-lactate dehydrogenase (331 aa).

NAD(+)-binding positions include 156–157, Asp176, 206–207, 233–235, and Asp259; these read RI, MP, and TAR. Arg235 is a catalytic residue. Glu264 is an active-site residue. Catalysis depends on His296, which acts as the Proton donor.

It belongs to the D-isomer specific 2-hydroxyacid dehydrogenase family.

It carries out the reaction (R)-lactate + NAD(+) = pyruvate + NADH + H(+). The protein is D-lactate dehydrogenase (ldhD) of Treponema pallidum (strain Nichols).